Consider the following 251-residue polypeptide: Probable transcriptional regulatory protein cgR_1708 (251 aa).

The interval 1–22 (MAGHSKWATTKHKKAANDAKRG) is disordered.

The protein belongs to the TACO1 family.

It localises to the cytoplasm. The chain is Probable transcriptional regulatory protein cgR_1708 from Corynebacterium glutamicum (strain R).